We begin with the raw amino-acid sequence, 251 residues long: MAVHLLIVDALNLIRRIHAVQGSPCVETCQHALDQLIMHSQPTHAVAVFDDENRSSGWRHQRLPDYKAGRPPMPEELHNEMPALRAAFEQRGVPCWSASGNEADDLAATLAVKVTQAGHQATIVSTDKGYCQLLSPTLRIRDYFQKRWLDAPFIDKEFGVQPQQLPDYWGLAGISSSKVPGVAGIGPKSATQLLVEFQSLEGIYENLDAVAEKWRKKLENHKEMAFLCRDIARLQTDLHIDGNLQQLRLVR.

D104 contacts Mg(2+). The 90-residue stretch at 160–249 folds into the 5'-3' exonuclease domain; sequence VQPQQLPDYW…IDGNLQQLRL (90 aa). K(+)-binding residues include L171, A172, P180, V182, and I185. The interaction with DNA stretch occupies residues 184–189; the sequence is GIGPKS.

The protein belongs to the Xni family. Mg(2+) is required as a cofactor. Requires K(+) as cofactor.

Its function is as follows. Has flap endonuclease activity. During DNA replication, flap endonucleases cleave the 5'-overhanging flap structure that is generated by displacement synthesis when DNA polymerase encounters the 5'-end of a downstream Okazaki fragment. The protein is Flap endonuclease Xni of Escherichia coli O6:K15:H31 (strain 536 / UPEC).